The following is a 234-amino-acid chain: Ubiquinone biosynthesis O-methyltransferase (234 aa).

The S-adenosyl-L-methionine site is built by Arg37, Gly56, Asp77, and Met121.

Belongs to the methyltransferase superfamily. UbiG/COQ3 family.

The catalysed reaction is a 3-demethylubiquinol + S-adenosyl-L-methionine = a ubiquinol + S-adenosyl-L-homocysteine + H(+). It carries out the reaction a 3-(all-trans-polyprenyl)benzene-1,2-diol + S-adenosyl-L-methionine = a 2-methoxy-6-(all-trans-polyprenyl)phenol + S-adenosyl-L-homocysteine + H(+). It functions in the pathway cofactor biosynthesis; ubiquinone biosynthesis. In terms of biological role, O-methyltransferase that catalyzes the 2 O-methylation steps in the ubiquinone biosynthetic pathway. This Aromatoleum aromaticum (strain DSM 19018 / LMG 30748 / EbN1) (Azoarcus sp. (strain EbN1)) protein is Ubiquinone biosynthesis O-methyltransferase.